A 132-amino-acid chain; its full sequence is Small ribosomal subunit protein uS8 (132 aa).

This sequence belongs to the universal ribosomal protein uS8 family. In terms of assembly, part of the 30S ribosomal subunit. Contacts proteins S5 and S12.

Its function is as follows. One of the primary rRNA binding proteins, it binds directly to 16S rRNA central domain where it helps coordinate assembly of the platform of the 30S subunit. The chain is Small ribosomal subunit protein uS8 from Corynebacterium glutamicum (strain R).